Consider the following 241-residue polypeptide: Orotidine 5'-phosphate decarboxylase (241 aa).

Substrate-binding positions include Asp18, Lys39, 66 to 75 (DLKFHDIPAT), Thr130, Arg192, Gln201, Gly221, and Arg222. Lys68 serves as the catalytic Proton donor.

This sequence belongs to the OMP decarboxylase family. Type 1 subfamily. Homodimer.

The enzyme catalyses orotidine 5'-phosphate + H(+) = UMP + CO2. It functions in the pathway pyrimidine metabolism; UMP biosynthesis via de novo pathway; UMP from orotate: step 2/2. Its function is as follows. Catalyzes the decarboxylation of orotidine 5'-monophosphate (OMP) to uridine 5'-monophosphate (UMP). This chain is Orotidine 5'-phosphate decarboxylase, found in Synechococcus sp. (strain CC9605).